Here is a 1331-residue protein sequence, read N- to C-terminus: ABC multidrug transporter MDR2 (1331 aa).

The interval 1-50 (MVEPSEKPNTQNDDVSKQEIRNPVSSSSSTSDKEKVAKKGNSDATKSLTP) is disordered. The segment covering 31–41 (SDKEKVAKKGN) has biased composition (basic and acidic residues). A run of 4 helical transmembrane segments spans residues 93–113 (MILLAIVSLASIAAGAALPLF), 147–167 (YFVYLGIAQFILLYVSTVGFI), 219–239 (KVGLTLTALSTFFSAFIIGYV), and 242–262 (WKLALICTSTIVAMVLVMGGI). Residues 97–387 (AIVSLASIAA…VAPNTQAFAS (291 aa)) form the ABC transmembrane type-1 1 domain. Asn-293 carries an N-linked (GlcNAc...) asparagine glycan. Transmembrane regions (helical) follow at residues 325 to 345 (LGIMFGSMMAIMYSNYGLGFW) and 358 to 378 (LSAIVNILLAIVIGSFSIGNV). Positions 422 to 667 (IEFRGIKHIY…KGTYLQLVEA (246 aa)) constitute an ABC transporter 1 domain. 457 to 464 (GPSGSGKS) contacts ATP. Residue Asn-529 is glycosylated (N-linked (GlcNAc...) asparagine). Helical transmembrane passes span 762 to 782 (LCGFFFAVLSGAGQPVQSVFF) and 808 to 828 (LMFLMLGLVQLITQSAQGVIF). One can recognise an ABC transmembrane type-1 2 domain in the interval 764 to 1051 (GFFFAVLSGA…VFSFSPDMGK (288 aa)). Residue Asn-860 is glycosylated (N-linked (GlcNAc...) asparagine). 4 consecutive transmembrane segments (helical) span residues 884–904 (LGTILMVSTTLIVALTVALAF), 910–930 (LVCISTVPVLLLCGFYRFWIL), 995–1015 (ASQSFSFFCLALGFWYGGGLL), and 1025–1045 (FFLCISCVIFGSQSAGIVFSF). The 239-residue stretch at 1086-1324 (IEFRDVHFRY…KGRYYELVHM (239 aa)) folds into the ABC transporter 2 domain. The N-linked (GlcNAc...) asparagine glycan is linked to Asn-1108. 1121–1128 (GPSGCGKS) contributes to the ATP binding site.

Belongs to the ABC transporter superfamily. ABCB family. Multidrug resistance exporter (TC 3.A.1.201) subfamily.

It is found in the cell membrane. The catalysed reaction is itraconazole(in) + ATP + H2O = itraconazole(out) + ADP + phosphate + H(+). In terms of biological role, ABC-type efflux transporter involved in the modulation susceptibility to itraconazole. This chain is ABC multidrug transporter MDR2, found in Trichophyton rubrum (strain ATCC MYA-4607 / CBS 118892) (Athlete's foot fungus).